A 417-amino-acid chain; its full sequence is Phosphoglycerate kinase 2 (417 aa).

Serine 2 bears the N-acetylserine mark. A phosphoserine mark is found at serine 2 and serine 4. N6-acetyllysine is present on lysine 11. Valine 23, aspartate 24, phenylalanine 25, asparagine 26, glutamine 38, arginine 39, serine 62, histidine 63, glycine 65, and arginine 66 together coordinate (2R)-3-phosphoglycerate. N6-acetyllysine occurs at positions 75, 86, and 97. Residues leucine 122 and arginine 123 each contribute to the (2R)-3-phosphoglycerate site. Lysine 131 and lysine 146 each carry N6-acetyllysine. Residues histidine 170 and arginine 171 each coordinate (2R)-3-phosphoglycerate. Tyrosine 196 carries the post-translational modification Phosphotyrosine. An N6-acetyllysine modification is found at lysine 199. Glycine 214 is a binding site for ADP. Glycine 214 is a binding site for CDP. AMP-binding residues include alanine 215 and lysine 216. ATP is bound at residue alanine 215. Alanine 215 contacts Mg(2+). 2 residues coordinate Mg(2+): alanine 218 and aspartate 219. Aspartate 219 is a binding site for CDP. Lysine 220 contributes to the AMP binding site. Lysine 220 contacts ATP. Position 238 (glycine 238) interacts with ADP. Glycine 238 is a binding site for CDP. Glycine 239 is an AMP binding site. Residue glycine 239 participates in ATP binding. Residues lysine 267 and lysine 291 each carry the N6-acetyllysine modification. Alanine 313 is an AMP binding site. Alanine 313 is a binding site for ATP. Positions 338 and 343 each coordinate CDP. Residue phenylalanine 343 participates in ADP binding. Glutamate 344 is a binding site for AMP. ATP contacts are provided by glutamate 344, aspartate 375, and threonine 376. Residue aspartate 375 participates in Mg(2+) binding.

This sequence belongs to the phosphoglycerate kinase family. As to quaternary structure, monomer. Requires Mg(2+) as cofactor. In terms of tissue distribution, testis specific.

It is found in the cytoplasm. It carries out the reaction (2R)-3-phosphoglycerate + ATP = (2R)-3-phospho-glyceroyl phosphate + ADP. It functions in the pathway carbohydrate degradation; glycolysis; pyruvate from D-glyceraldehyde 3-phosphate: step 2/5. Essential for sperm motility and male fertility but is not required for the completion of spermatogenesis. The chain is Phosphoglycerate kinase 2 from Sus scrofa (Pig).